We begin with the raw amino-acid sequence, 475 residues long: ATP synthase subunit beta (475 aa).

148 to 155 contributes to the ATP binding site; sequence GGAGVGKT.

This sequence belongs to the ATPase alpha/beta chains family. In terms of assembly, F-type ATPases have 2 components, CF(1) - the catalytic core - and CF(0) - the membrane proton channel. CF(1) has five subunits: alpha(3), beta(3), gamma(1), delta(1), epsilon(1). CF(0) has three main subunits: a(1), b(2) and c(9-12). The alpha and beta chains form an alternating ring which encloses part of the gamma chain. CF(1) is attached to CF(0) by a central stalk formed by the gamma and epsilon chains, while a peripheral stalk is formed by the delta and b chains.

It is found in the cell inner membrane. It catalyses the reaction ATP + H2O + 4 H(+)(in) = ADP + phosphate + 5 H(+)(out). Produces ATP from ADP in the presence of a proton gradient across the membrane. The catalytic sites are hosted primarily by the beta subunits. The polypeptide is ATP synthase subunit beta (Psychrobacter sp. (strain PRwf-1)).